Consider the following 159-residue polypeptide: Probable cyclic pyranopterin monophosphate synthase accessory protein (159 aa).

The active site involves D128.

This sequence belongs to the MoaC family.

It participates in cofactor biosynthesis; molybdopterin biosynthesis. Functionally, together with MoaA, is involved in the conversion of 5'-GTP to cyclic pyranopterin monophosphate (cPMP or molybdopterin precursor Z). The polypeptide is Probable cyclic pyranopterin monophosphate synthase accessory protein (Methanothermobacter thermautotrophicus (strain ATCC 29096 / DSM 1053 / JCM 10044 / NBRC 100330 / Delta H) (Methanobacterium thermoautotrophicum)).